The primary structure comprises 642 residues: MPVITLPDGSQRHYDHAVSVLDVALDIGPGLAKACIAGRVNGELVDASDLIESDAQLAIITAKDAEGLEILRHSCAHLLGHAIKQLWPDTKMAIGPVIDNGFYYDVDIEHTLTQEDLALLEKRMHELADKDYDVIKKKVSWQEARDTFAARGEDYKVAILDENISRDDRPGLYHHEEYVDMCRGPHVPNMRFCHHFKLQKTSGAYWRGDSKNKMLQRIYGTAWGDKKQLNAYLQRLEEAAKRDHRKIGKQLDLYHMQEEAPGMVFWHNDGWTIFRELETFVRMKLKEYQYQEVKGPFMMDRVLWEKTGHWENYAEHMFTTSSENREYCIKPMNCPGHVQIFNQGLKSYRDLPLRMAEFGSCHRNEPSGALHGLMRVRGFTQDDAHVFCTEEQVRDEVNSCIKMVYDMYSTFGFEKIVVKLSTRPEKRIGSDELWTRAEDDLAAALTENGIPFDYQPGEGAFYGPKIEFTLHDCLDRAWQCGTVQLDFSLPGRLSASYIGENNDRQVPVMIHRAILGSMERFIGILTEEYAGFFPTWLAPVQVVVMNITDSQSDYVQQVTKKLQDAGIRAKADLRNEKIGFKIREHTLRRVPYMLVCGDKEVESGKIAVRTRRGKDLGSLDVNVVVDQLLAEIRSRSLHQLEE.

In terms of domain architecture, TGS spans 1–61 (MPVITLPDGS…ESDAQLAIIT (61 aa)). The catalytic stretch occupies residues 243 to 534 (DHRKIGKQLD…LTEEYAGFFP (292 aa)). The Zn(2+) site is built by cysteine 334, histidine 385, and histidine 511.

This sequence belongs to the class-II aminoacyl-tRNA synthetase family. Homodimer. Zn(2+) is required as a cofactor.

The protein resides in the cytoplasm. It carries out the reaction tRNA(Thr) + L-threonine + ATP = L-threonyl-tRNA(Thr) + AMP + diphosphate + H(+). Its function is as follows. Catalyzes the attachment of threonine to tRNA(Thr) in a two-step reaction: L-threonine is first activated by ATP to form Thr-AMP and then transferred to the acceptor end of tRNA(Thr). Also edits incorrectly charged L-seryl-tRNA(Thr). The chain is Threonine--tRNA ligase from Yersinia pseudotuberculosis serotype O:1b (strain IP 31758).